The primary structure comprises 122 residues: Small ribosomal subunit protein uS13 (122 aa).

A disordered region spans residues P97–K122.

It belongs to the universal ribosomal protein uS13 family. Part of the 30S ribosomal subunit. Forms a loose heterodimer with protein S19. Forms two bridges to the 50S subunit in the 70S ribosome.

Located at the top of the head of the 30S subunit, it contacts several helices of the 16S rRNA. In the 70S ribosome it contacts the 23S rRNA (bridge B1a) and protein L5 of the 50S subunit (bridge B1b), connecting the 2 subunits; these bridges are implicated in subunit movement. Contacts the tRNAs in the A and P-sites. The sequence is that of Small ribosomal subunit protein uS13 from Brucella anthropi (strain ATCC 49188 / DSM 6882 / CCUG 24695 / JCM 21032 / LMG 3331 / NBRC 15819 / NCTC 12168 / Alc 37) (Ochrobactrum anthropi).